The chain runs to 295 residues: Enolase-phosphatase E1 (295 aa).

Asp-20 and Glu-22 together coordinate Mg(2+). Substrate-binding positions include 153–154 (SS) and Lys-187. Residue Asp-212 coordinates Mg(2+). Positions 260–295 (ETKEENGGATNGKRKIEETNDDVAEEDKAQVYPNKK) are disordered.

The protein belongs to the HAD-like hydrolase superfamily. MasA/MtnC family. Monomer. Requires Mg(2+) as cofactor.

The protein resides in the cytoplasm. It is found in the nucleus. The catalysed reaction is 5-methylsulfanyl-2,3-dioxopentyl phosphate + H2O = 1,2-dihydroxy-5-(methylsulfanyl)pent-1-en-3-one + phosphate. The protein operates within amino-acid biosynthesis; L-methionine biosynthesis via salvage pathway; L-methionine from S-methyl-5-thio-alpha-D-ribose 1-phosphate: step 3/6. It participates in amino-acid biosynthesis; L-methionine biosynthesis via salvage pathway; L-methionine from S-methyl-5-thio-alpha-D-ribose 1-phosphate: step 4/6. Bifunctional enzyme that catalyzes the enolization of 2,3-diketo-5-methylthiopentyl-1-phosphate (DK-MTP-1-P) into the intermediate 2-hydroxy-3-keto-5-methylthiopentenyl-1-phosphate (HK-MTPenyl-1-P), which is then dephosphorylated to form the acireductone 1,2-dihydroxy-3-keto-5-methylthiopentene (DHK-MTPene). This Anopheles gambiae (African malaria mosquito) protein is Enolase-phosphatase E1.